The following is a 330-amino-acid chain: CRISPR-associated endonuclease Cas1 2 (330 aa).

Mn(2+) is bound by residues glutamate 156, histidine 222, and glutamate 237.

This sequence belongs to the CRISPR-associated endonuclease Cas1 family. In terms of assembly, homodimer, forms a heterotetramer with a Cas2 homodimer. The cofactor is Mg(2+). Mn(2+) is required as a cofactor.

Its function is as follows. CRISPR (clustered regularly interspaced short palindromic repeat), is an adaptive immune system that provides protection against mobile genetic elements (viruses, transposable elements and conjugative plasmids). CRISPR clusters contain spacers, sequences complementary to antecedent mobile elements, and target invading nucleic acids. CRISPR clusters are transcribed and processed into CRISPR RNA (crRNA). Acts as a dsDNA endonuclease. Involved in the integration of spacer DNA into the CRISPR cassette. The polypeptide is CRISPR-associated endonuclease Cas1 2 (Thermodesulfovibrio yellowstonii (strain ATCC 51303 / DSM 11347 / YP87)).